A 149-amino-acid chain; its full sequence is Large ribosomal subunit protein bL9 (149 aa).

Belongs to the bacterial ribosomal protein bL9 family.

In terms of biological role, binds to the 23S rRNA. The sequence is that of Large ribosomal subunit protein bL9 from Klebsiella pneumoniae (strain 342).